A 140-amino-acid chain; its full sequence is MSTIRCDIVSAEQEIFRGEATLVVATGELGELGIAPKHAPLITRLKPGKVVVTTPNGEQLDFAISGGILEVQPQVVTVLADTAIRAQDIDEASVRKAKEEAERILANRGEAMEVAEAQQKLAEAVVQLQALERLRKTLKH.

The protein belongs to the ATPase epsilon chain family. As to quaternary structure, F-type ATPases have 2 components, CF(1) - the catalytic core - and CF(0) - the membrane proton channel. CF(1) has five subunits: alpha(3), beta(3), gamma(1), delta(1), epsilon(1). CF(0) has three main subunits: a, b and c.

The protein resides in the cell inner membrane. Functionally, produces ATP from ADP in the presence of a proton gradient across the membrane. The sequence is that of ATP synthase epsilon chain from Stenotrophomonas maltophilia (strain R551-3).